We begin with the raw amino-acid sequence, 407 residues long: Betaine--homocysteine S-methyltransferase 1 (407 aa).

One can recognise a Hcy-binding domain in the interval 11–314 (KGILERLNSG…YHIRAIAEEL (304 aa)). 3 positions are modified to N6-succinyllysine: Lys40, Lys93, and Lys98. Cys217 is a Zn(2+) binding site. Lys232 and Lys241 each carry N6-succinyllysine. Cys299 and Cys300 together coordinate Zn(2+). A Phosphoserine modification is found at Ser330. An N6-succinyllysine mark is found at Lys340 and Lys377.

Homotetramer. Requires Zn(2+) as cofactor.

It is found in the cytoplasm. It localises to the cytosol. Its subcellular location is the nucleus. The enzyme catalyses L-homocysteine + glycine betaine = N,N-dimethylglycine + L-methionine. It functions in the pathway amine and polyamine degradation; betaine degradation; sarcosine from betaine: step 1/2. The protein operates within amino-acid biosynthesis; L-methionine biosynthesis via de novo pathway; L-methionine from L-homocysteine (BhmT route): step 1/1. Its function is as follows. Involved in the regulation of homocysteine metabolism. Converts betaine and homocysteine to dimethylglycine and methionine, respectively. This reaction is also required for the irreversible oxidation of choline. In Bos taurus (Bovine), this protein is Betaine--homocysteine S-methyltransferase 1 (BHMT).